We begin with the raw amino-acid sequence, 432 residues long: D-amino acid dehydrogenase (432 aa).

3–17 provides a ligand contact to FAD; it reads VLVLGSGVIGTASAY.

The protein belongs to the DadA oxidoreductase family. Requires FAD as cofactor.

The enzyme catalyses a D-alpha-amino acid + A + H2O = a 2-oxocarboxylate + AH2 + NH4(+). It participates in amino-acid degradation; D-alanine degradation; NH(3) and pyruvate from D-alanine: step 1/1. In terms of biological role, oxidative deamination of D-amino acids. The chain is D-amino acid dehydrogenase from Ectopseudomonas mendocina (strain ymp) (Pseudomonas mendocina).